Here is a 653-residue protein sequence, read N- to C-terminus: Protease 1 (653 aa).

The segment at residues Met1–Ala20 is a signal peptide (or 27). Positions Ala21–Lys205 are excised as a propeptide. 3 disulfides stabilise this stretch: Cys211/Cys421, Cys217/Cys285, and Cys241/Cys263. Catalysis depends on charge relay system residues His262, Asp318, and Ser399. In terms of domain architecture, PKD spans Asn474 to Val553. The propeptide at Asn474–Gly653 is thr/Ser-rich. One can recognise a P/Homo B domain in the interval Gly555–Gly653.

It belongs to the peptidase S1 family. In terms of processing, three disulfide bonds are present.

Its subcellular location is the secreted. The enzyme catalyses Preferential cleavage: Lys-|-Xaa, including Lys-|-Pro.. This chain is Protease 1, found in Achromobacter lyticus.